Reading from the N-terminus, the 165-residue chain is Phosphopantetheine adenylyltransferase (165 aa).

Residue serine 8 coordinates substrate. Residues 8-9 (SF) and histidine 16 each bind ATP. Substrate-binding residues include lysine 40, threonine 72, and arginine 86. Residues 87-89 (GLR), glutamate 97, and 122-128 (YSFLSSS) each bind ATP.

Belongs to the bacterial CoaD family. In terms of assembly, homohexamer. The cofactor is Mg(2+).

Its subcellular location is the cytoplasm. The enzyme catalyses (R)-4'-phosphopantetheine + ATP + H(+) = 3'-dephospho-CoA + diphosphate. The protein operates within cofactor biosynthesis; coenzyme A biosynthesis; CoA from (R)-pantothenate: step 4/5. Its function is as follows. Reversibly transfers an adenylyl group from ATP to 4'-phosphopantetheine, yielding dephospho-CoA (dPCoA) and pyrophosphate. In Synechococcus sp. (strain WH7803), this protein is Phosphopantetheine adenylyltransferase.